The sequence spans 408 residues: Probable fructose-2,6-bisphosphatase C732.02c (408 aa).

Residue 16–24 (GLPASGKTS) coordinates ATP. Asp88 is an active-site residue. Residue 127–132 (NITDMC) coordinates ATP. Position 157 (Tyr157) interacts with beta-D-fructose 6-phosphate. Arg213 lines the beta-D-fructose 2,6-bisphosphate pocket. Catalysis depends on His214, which acts as the Tele-phosphohistidine intermediate. Positions 220 and 226 each coordinate beta-D-fructose 2,6-bisphosphate. The active-site Proton donor/acceptor is Glu285. Beta-D-fructose 2,6-bisphosphate-binding residues include Tyr296, Arg310, Lys314, Tyr325, Gln351, and Arg355. 307–310 (AELR) lines the ATP pocket. ATP is bound by residues 351-355 (QAILR) and Tyr387.

In the C-terminal section; belongs to the phosphoglycerate mutase family.

It carries out the reaction beta-D-fructose 2,6-bisphosphate + H2O = beta-D-fructose 6-phosphate + phosphate. In terms of biological role, this is predominantly if not solely a fructose-2,6-bisphosphatase. The sequence is that of Probable fructose-2,6-bisphosphatase C732.02c from Schizosaccharomyces pombe (strain 972 / ATCC 24843) (Fission yeast).